The chain runs to 292 residues: Histamine N-methyltransferase (292 aa).

E28 contacts substrate. 3 residues coordinate S-adenosyl-L-methionine: G60, E89, and I142. Substrate is bound at residue N283.

Belongs to the class I-like SAM-binding methyltransferase superfamily. HNMT family. As to quaternary structure, monomer.

It localises to the cytoplasm. It carries out the reaction histamine + S-adenosyl-L-methionine = N(tau)-methylhistamine + S-adenosyl-L-homocysteine + H(+). Functionally, inactivates histamine by N-methylation. Plays an important role in degrading histamine and in regulating the airway response to histamine. This is Histamine N-methyltransferase (hnmt) from Danio rerio (Zebrafish).